A 248-amino-acid polypeptide reads, in one-letter code: 14-3-3-like protein G-BOX factor 14 lambda (248 aa).

3 positions are modified to phosphoserine; by CRPK1: Ser-70, Ser-112, and Ser-193. The residue at position 214 (Thr-214) is a Phosphothreonine; by CRPK1.

The protein belongs to the 14-3-3 family. Interacts with SERK1 in the cell membrane. Component of the SERK1 signaling complex, composed of KAPP, CDC48A, GRF6 or GRF7, SERK1, SERK2, SERK3/BAK1 and BRI1. Interacts with TPK1. Interacts with ADF1. Binds to CRPK1 at the plasma membrane. Interacts with DREB1A and DREB1B in the nucleus when activated by CRPK1-mediated phosphorylation upon freezing. Interacts with CINV1. Binds to the N-terminal region of B1L. In terms of processing, transphosphorylated by SERK1. Post-translationally, phosphorylated by CRPK1 in response to cold.

It localises to the nucleus. It is found in the cell membrane. The protein resides in the cytoplasm. Its function is as follows. Is associated with a DNA binding complex that binds to the G box, a well-characterized cis-acting DNA regulatory element found in plant genes. Specific negative regulator of slow-vacuolar (SV) ion channel. Mediates F-actin dynamics possibly through inhibiting ADF1 phosphorylation. Negative regulator of freezing tolerance that modulates cold-responsive C-repeat-binding factors (CBF) DREB1A and DREB1B proteins stability by facilitating their ubiquitin-mediated degradation when activated by CRPK1-mediated phosphorylation in freezing conditions; this processus is counteracted by B1L. The sequence is that of 14-3-3-like protein G-BOX factor 14 lambda from Arabidopsis thaliana (Mouse-ear cress).